The following is a 156-amino-acid chain: Small ribosomal subunit protein uS7 (156 aa).

This sequence belongs to the universal ribosomal protein uS7 family. In terms of assembly, part of the 30S ribosomal subunit. Contacts proteins S9 and S11.

One of the primary rRNA binding proteins, it binds directly to 16S rRNA where it nucleates assembly of the head domain of the 30S subunit. Is located at the subunit interface close to the decoding center, probably blocks exit of the E-site tRNA. The polypeptide is Small ribosomal subunit protein uS7 (Sodalis glossinidius (strain morsitans)).